The following is a 570-amino-acid chain: Hydroxylamine reductase (570 aa).

[4Fe-4S] cluster-binding residues include Cys-5, Cys-8, Cys-17, and Cys-23. Hybrid [4Fe-2O-2S] cluster is bound by residues His-266, Glu-290, Cys-334, Cys-425, Cys-453, Cys-478, Glu-513, and Lys-515. Residue Cys-425 is modified to Cysteine persulfide.

Belongs to the HCP family. The cofactor is [4Fe-4S] cluster. It depends on hybrid [4Fe-2O-2S] cluster as a cofactor.

It is found in the cytoplasm. The enzyme catalyses A + NH4(+) + H2O = hydroxylamine + AH2 + H(+). Its function is as follows. Catalyzes the reduction of hydroxylamine to form NH(3) and H(2)O. This chain is Hydroxylamine reductase, found in Clostridium botulinum (strain Loch Maree / Type A3).